Here is a 199-residue protein sequence, read N- to C-terminus: Cytochrome c oxidase assembly protein CtaG (199 aa).

The Cytoplasmic segment spans residues 1–12; sequence MTNTPQTPPKER. A helical; Signal-anchor for type II membrane protein transmembrane segment spans residues 13-35; the sequence is ANGVIVGACLAFVAGMVGMAYAA. Residues 36 to 199 are Periplasmic-facing; it reads VPLYDMFCRV…VKDGETENRL (164 aa).

Belongs to the COX11/CtaG family.

The protein resides in the cell inner membrane. Its function is as follows. Exerts its effect at some terminal stage of cytochrome c oxidase synthesis, probably by being involved in the insertion of the copper B into subunit I. The protein is Cytochrome c oxidase assembly protein CtaG of Sinorhizobium fredii (strain NBRC 101917 / NGR234).